A 182-amino-acid chain; its full sequence is MKKHILFLGAPGAGKGTQAELISQSNSYLHLSTGELLRKEIEMNTALGIQVKDIMNRGELVSDELVLKIVRQNLVKDNKGWILDGYPRNLSQANSLNEVLNEINQPLELVFYLDIPEEVLIKRLLLRGRKDDTEETIRTRVDIYKKTTEPLIQYFKDLSLIEYIDADRDLKTISSDIKQKMA.

12–17 (GAGKGT) is an ATP binding site. Positions 32 to 61 (STGELLRKEIEMNTALGIQVKDIMNRGELV) are NMP. Residues T33, R38, 59-61 (ELV), 85-88 (GYPR), and Q92 each bind AMP. The interval 126 to 132 (LRGRKDD) is LID. Residue R127 coordinates ATP. AMP contacts are provided by R129 and R140. R168 contacts ATP.

This sequence belongs to the adenylate kinase family. Monomer.

It localises to the cytoplasm. The enzyme catalyses AMP + ATP = 2 ADP. It functions in the pathway purine metabolism; AMP biosynthesis via salvage pathway; AMP from ADP: step 1/1. Its function is as follows. Catalyzes the reversible transfer of the terminal phosphate group between ATP and AMP. Plays an important role in cellular energy homeostasis and in adenine nucleotide metabolism. The protein is Adenylate kinase of Prochlorococcus marinus (strain MIT 9301).